We begin with the raw amino-acid sequence, 367 residues long: Isocitrate dehydrogenase [NAD] regulatory subunit 1, mitochondrial (367 aa).

The transit peptide at 1–25 directs the protein to the mitochondrion; it reads MSRRSLTLLKNLARNANGSGIQTRS.

Belongs to the isocitrate and isopropylmalate dehydrogenases family. In terms of assembly, heterooligomer of catalytic and regulatory subunits. Ubiquitous. Predominantly expressed in roots, stems and leaves.

Its subcellular location is the mitochondrion. Its function is as follows. Performs an essential role in the oxidative function of the citric acid cycle. The sequence is that of Isocitrate dehydrogenase [NAD] regulatory subunit 1, mitochondrial (IDH1) from Arabidopsis thaliana (Mouse-ear cress).